A 586-amino-acid polypeptide reads, in one-letter code: 2-succinyl-5-enolpyruvyl-6-hydroxy-3-cyclohexene-1-carboxylate synthase (586 aa).

Belongs to the TPP enzyme family. MenD subfamily. As to quaternary structure, homodimer. Mg(2+) serves as cofactor. It depends on Mn(2+) as a cofactor. Thiamine diphosphate is required as a cofactor.

It catalyses the reaction isochorismate + 2-oxoglutarate + H(+) = 5-enolpyruvoyl-6-hydroxy-2-succinyl-cyclohex-3-ene-1-carboxylate + CO2. The protein operates within quinol/quinone metabolism; 1,4-dihydroxy-2-naphthoate biosynthesis; 1,4-dihydroxy-2-naphthoate from chorismate: step 2/7. Its pathway is quinol/quinone metabolism; menaquinone biosynthesis. Catalyzes the thiamine diphosphate-dependent decarboxylation of 2-oxoglutarate and the subsequent addition of the resulting succinic semialdehyde-thiamine pyrophosphate anion to isochorismate to yield 2-succinyl-5-enolpyruvyl-6-hydroxy-3-cyclohexene-1-carboxylate (SEPHCHC). This chain is 2-succinyl-5-enolpyruvyl-6-hydroxy-3-cyclohexene-1-carboxylate synthase, found in Geobacillus thermodenitrificans (strain NG80-2).